The sequence spans 208 residues: UPF0637 protein BcerKBAB4_3786 (208 aa).

It belongs to the UPF0637 family.

The protein is UPF0637 protein BcerKBAB4_3786 of Bacillus mycoides (strain KBAB4) (Bacillus weihenstephanensis).